We begin with the raw amino-acid sequence, 66 residues long: uncharacterized protein (66 aa).

The next 2 membrane-spanning stretches (helical) occupy residues 5-25 (ALIV…PLVN) and 30-50 (IMFG…VTPL).

It localises to the cell membrane. This is an uncharacterized protein from Bacillus subtilis (strain 168).